Here is a 58-residue protein sequence, read N- to C-terminus: Rho-conotoxin TIA (58 aa).

The first 16 residues, 1-16 (MFTVFLLVVLATTGVS), serve as a signal peptide directing secretion. A propeptide spanning residues 17 to 38 (FTLDRASDGGNAVAKKSDVTAR) is cleaved from the precursor. Residues 40–42 (NWR) form an interaction with ADRA1B region. Disulfide bonds link cysteine 43–cysteine 49 and cysteine 44–cysteine 57. The lacks the Ser-Xaa-Pro motif that is crucial for potent interaction with nAChR stretch occupies residues 45–47 (LIP). The residue at position 57 (cysteine 57) is a Cysteine amide.

Belongs to the conotoxin A superfamily. Expressed by the venom duct.

The protein localises to the secreted. In terms of biological role, allosteric inhibitor of alpha-1B adrenergic receptors (ADRA1B). Binds to an allosteric modulatory site on transmembrane helix 6 and 7 at the base of extracellular loop 3 of ADRA1B. Also weakly inhibits alpha-1A (ADRA1A) and alpha-1D (ADRA1D) adrenergic receptors in a competitive manner. Potently inhibits contractions of vas deferens, spleen and aorta in response to noradrenaline. May also inhibits nicotinic acetylcholine receptors with a possible distinct nAChR binding mode from other alpha-conotoxins, due to a different three residue motif (lacks the Ser-Xaa-Pro motif). This chain is Rho-conotoxin TIA, found in Conus tulipa (Fish-hunting cone snail).